The sequence spans 295 residues: Origin of replication complex subunit 6 (295 aa).

The disordered stretch occupies residues 212–295; the sequence is PSKRKHDDDS…MALEVSSAAN (84 aa). A compositionally biased stretch (acidic residues) spans 220-236; the sequence is DSDSSGESSGDDQDELD. Over residues 254–263 the composition is skewed to polar residues; sequence WKSSVLSNKQ.

Belongs to the ORC6 family. Component of the origin recognition complex (ORC) composed of at least ORC1, ORC2, ORC3, ORC4, ORC5 and ORC6. ORC is regulated in a cell-cycle and development dependent manner. It is sequentially assembled at the exit from anaphase of mitosis and disassembled as cells enter S phase.

The protein resides in the nucleus. Its function is as follows. Component of the origin recognition complex (ORC) that binds origins of replication. DNA-binding is ATP-dependent. The specific DNA sequences that define origins of replication have not been identified yet. ORC is required to assemble the pre-replication complex necessary to initiate DNA replication. The chain is Origin of replication complex subunit 6 from Oryza sativa subsp. japonica (Rice).